Reading from the N-terminus, the 546-residue chain is MAKEIKFSDSARNLLFEGVRQLHDAVKVTMGPRGRNVLIQKSYGAPSITKDGVSVAKEIELSCPVANMGAQLVKEVASKTADAAGDGTTTATVLAYSIFKEGLRNITAGANPIEVKRGMDKAAEAIINELKKASKKVGGKEEITQVATISANSDHNIGKLIADAMEKVGKDGVITVEEAKGIEDELDVVEGMQFDRGYLSPYFVTNAEKMTAQLDNAYILLTDKKISSMKDILPLLEKTMKEGKPLLIIAEDIEGEALTTLVVNKLRGVLNIAAVKAPGFGDRRKEMLKDIAILTGGQVISEELGLSLENAEVEFLGKAGRIVIDKDNTTIVDGKGHSHDVKDRVAQIKTQIASTTSDYDKEKLQERLAKLSGGVAVIKVGAASEVEMKEKKDRVDDALSATKAAVEEGIVIGGGAALIRAAQKVHLNLHDDEKVGYEIIMRAIKAPLAQIAINAGYDGGVVVNEVEKHEGHFGFNASNGKYVDMFKEGIIDPLKVERIALQNAVSVSSLLLTTEATVHEIKEEKAAPAMPDMGGMGGMGGMGGMM.

ATP contacts are provided by residues 29–32, lysine 50, 86–90, glycine 414, and aspartate 492; these read TMGP and DGTTT.

This sequence belongs to the chaperonin (HSP60) family. In terms of assembly, forms a cylinder of 14 subunits composed of two heptameric rings stacked back-to-back. Interacts with the co-chaperonin GroES.

It localises to the cytoplasm. The enzyme catalyses ATP + H2O + a folded polypeptide = ADP + phosphate + an unfolded polypeptide.. Functionally, together with its co-chaperonin GroES, plays an essential role in assisting protein folding. The GroEL-GroES system forms a nano-cage that allows encapsulation of the non-native substrate proteins and provides a physical environment optimized to promote and accelerate protein folding. This Helicobacter pylori (strain ATCC 700392 / 26695) (Campylobacter pylori) protein is Chaperonin GroEL.